We begin with the raw amino-acid sequence, 241 residues long: High mobility group B protein 7 (241 aa).

Polar residues-rich tracts occupy residues 1–11 (MAGPSTTSNAP) and 20–29 (ETSSNTSTTL). Disordered regions lie at residues 1–30 (MAGP…TTLR), 75–116 (TQAE…NKPK), and 174–241 (EYNK…LDDY). Residues 77-90 (AEAKKKPAEKKKTT) show a composition bias toward basic and acidic residues. The segment at residues 115–183 (PKRPLTAFFI…EYNKSLESND (69 aa)) is a DNA-binding region (HMG box). Acidic residues-rich tracts occupy residues 182-221 (NDAD…ENTD) and 229-241 (GKEE…LDDY).

Belongs to the HMGB family. Phosphorylated. Expressed at low levels in lateral roots, root tips, cotyledons, leaves and flowers (including pedicels, but excluding styles).

The protein resides in the nucleus. In terms of biological role, binds preferentially double-stranded supercoiled DNA. Required for karyogamy during female gametophyte development, when the two polar nuclei fuse to form the diploid central cell nucleus. The chain is High mobility group B protein 7 (HMGB7) from Arabidopsis thaliana (Mouse-ear cress).